The chain runs to 240 residues: MCTLFIADLHLSEHEPAITAGFLRFLREDAIQADSLYILGDLFDYWIGDDDNNPLHREIASALKTVQQQGVSCYFIHGNRDFLLGSRFAKESGIILLPQEKVLELYGKRVLILHGDTLCTDDEGYQRYRKRVHTPWIQRLFLLLPLSIRQKIAVKMRANSQSVNRRKSEAIMDVNQQAVIDTFERYQADWMIHGHTHRPFVHEVPLHDKTVYRGVLGAWHHQGSMFKITDKSIDLISFPF.

Residues D8, H10, D41, N79, and H114 each coordinate Mn(2+). 79–80 (NR) serves as a coordination point for substrate. Residues D122, S160, N164, K167, and H195 each coordinate substrate. 2 residues coordinate Mn(2+): H195 and H197.

Belongs to the LpxH family. Mn(2+) is required as a cofactor.

It is found in the cell inner membrane. It carries out the reaction UDP-2-N,3-O-bis[(3R)-3-hydroxytetradecanoyl]-alpha-D-glucosamine + H2O = 2-N,3-O-bis[(3R)-3-hydroxytetradecanoyl]-alpha-D-glucosaminyl 1-phosphate + UMP + 2 H(+). The protein operates within glycolipid biosynthesis; lipid IV(A) biosynthesis; lipid IV(A) from (3R)-3-hydroxytetradecanoyl-[acyl-carrier-protein] and UDP-N-acetyl-alpha-D-glucosamine: step 4/6. Functionally, hydrolyzes the pyrophosphate bond of UDP-2,3-diacylglucosamine to yield 2,3-diacylglucosamine 1-phosphate (lipid X) and UMP by catalyzing the attack of water at the alpha-P atom. Involved in the biosynthesis of lipid A, a phosphorylated glycolipid that anchors the lipopolysaccharide to the outer membrane of the cell. In Photorhabdus laumondii subsp. laumondii (strain DSM 15139 / CIP 105565 / TT01) (Photorhabdus luminescens subsp. laumondii), this protein is UDP-2,3-diacylglucosamine hydrolase.